We begin with the raw amino-acid sequence, 366 residues long: Inactive protein RESTRICTED TEV MOVEMENT 2 (366 aa).

The region spanning 14–121 is the sHSP domain; sequence VQYEDFVPKS…LPETSRTEAA (108 aa). One copy of the A-1 repeat lies at 129–133; it reads LEEKR. A 6 X 5 AA repeats A of L-E-E-[SKR]-[ERK] region spans residues 129-220; it reads LEEKRLLEES…LEERRLEERK (92 aa). The stretch at 135–139 is one A-2 repeat; that stretch reads LEESR. An A-3 repeat occupies 156–160; sequence LEEKE. One copy of the B-1 repeat lies at 163–176; sequence IRKLQEEAKAKEEA. A 3 X 14 AA repeats B of [IMA]-[RK]-K-L-Q-E-E-A-K-A-K-E-[EK]-[LA] region spans residues 163–206; the sequence is IRKLQEEAKAKEEAEMRKLQEEAKANEEAAAKKLQEEIEAKEKL. One copy of the B-2 repeat lies at 178–191; the sequence is MRKLQEEAKANEEA. The stretch at 193 to 205 is one B-3 repeat; sequence AKKLQEEIEAKEK. The A-4 repeat unit spans residues 206–210; that stretch reads LEERK. The stretch at 211–215 is one A-5 repeat; sequence LEERR. An A-6 repeat occupies 216 to 220; the sequence is LEERK. Residues 322-342 traverse the membrane as a helical segment; sequence LMMNVGVAALVIFALGAYVSY. Residues 345–366 form a disordered region; that stretch reads CSSSSSSSSSSPSSSSSSTKPE. Residues 346–366 are compositionally biased toward low complexity; it reads SSSSSSSSSSPSSSSSSTKPE.

Belongs to the small heat shock protein (HSP20) family.

It localises to the cell membrane. In terms of biological role, seems to not be involved in heat resistance. Unable to mediate restriction of long-distance movement of the pathogenic tobacco etch virus (TEV) without causing a hypersensitive response or inducing systemic acquired resistance. The polypeptide is Inactive protein RESTRICTED TEV MOVEMENT 2 (RTM2) (Arabidopsis thaliana (Mouse-ear cress)).